A 75-amino-acid chain; its full sequence is UPF0352 protein ESA_01049 (75 aa).

It belongs to the UPF0352 family.

In Cronobacter sakazakii (strain ATCC BAA-894) (Enterobacter sakazakii), this protein is UPF0352 protein ESA_01049.